Here is a 317-residue protein sequence, read N- to C-terminus: MAEVESGSNQRQNEEIEAMAAIYGEEWCVIDEVAKIFCIRITDDMDDPKWTLCLQVMLPSEYPGTAPPVYQLNAPWLKGQERAELAKSLEEIYMKNIGESILYQWVEKIRDALIQKSQITEPGPDEKKKTEEEEVEGEDDPILEHPPENPVKTWDLKISESAPEAEELPPIAHGAPITDRRSTFQAHLAPVVCIDQVKKVLAKLYENKKIASATHNIYAYRIYCEDKQTFLQDSEDDGETAAGGRLLHLMEILNVKNVMVVVSRWYGGILLGPDRFKHINNCARNILVEKNFTNSPEESAKSFGKKKVKKDKKKGDH.

Residues 14 to 116 (EEIEAMAAIY…EKIRDALIQK (103 aa)) enclose the RWD domain. Disordered regions lie at residues 117–151 (SQIT…ENPV) and 295–317 (SPEE…KGDH). The segment covering 132-141 (EEEVEGEDDP) has biased composition (acidic residues). Ser295 carries the post-translational modification Phosphoserine. Residues 303–317 (FGKKKVKKDKKKGDH) are compositionally biased toward basic residues.

This sequence belongs to the IMPACT family. As to quaternary structure, interacts with GCN1; prevents the interaction of GCN1 with EIF2AK4/GCN2 and inhibits EIF2AK4/GCN2 kinase activity. Interaction with RPL39; this interaction occurs in a GCN1-independent manner. Associates with ribosomes; this interaction occurs in a GCN1-independent manner. Associates with actin; this interaction occurs in a GCN1-independent manner.

The protein localises to the cytoplasm. Translational regulator that ensures constant high levels of translation upon a variety of stress conditions, such as amino acid starvation, UV-C irradiation, proteasome inhibitor treatment and glucose deprivation. Plays a role as a negative regulator of the EIF2AK4/GCN2 kinase activity; impairs GCN1-mediated EIF2AK4/GCN2 activation, and hence EIF2AK4/GCN2-mediated eIF-2-alpha phosphorylation and subsequent down-regulation of protein synthesis. May be required to regulate translation in specific neuronal cells under amino acid starvation conditions by preventing GCN2 activation and therefore ATF4 synthesis. Through its inhibitory action on EIF2AK4/GCN2, plays a role in differentiation of neuronal cells by stimulating neurite outgrowth. In Rattus norvegicus (Rat), this protein is Protein IMPACT (Impact).